Consider the following 393-residue polypeptide: MANDFLFTSESVSEGHPDKVADQISDAILDAIFTQDPRSRVAAETLTNTGLVVLAGEITTNAHVDYIQVARDTIQRIGYDNTEYGIDYKGCAVLVAYDKQSNDIAQGVDHASDDHLNTGAGDQGLMFGYACDETPELMPAPIYYAHRLVERQAQLRKDGRLPFLRPDAKSQVTMRYVDGKPHSIDTVVLSTQHSPDQSETATKMKASFTEAIIEEIIKPVLPKEWLQDTKYLINPTGRFVIGGPQGDCGLTGRKIIVDTYGGACPHGGGAFSGKDPTKVDRSAAYAARYVAKNIVAAGLARQCQIQVAYAIGVARPMNITVYTEGTGVIPDDQIAQLVQEHFDLRPKGIIQMLDLLRPIYAKTAAYGHFGREEPEFTWERTDKAAALRAAAGL.

ATP is bound at residue histidine 16. Aspartate 18 provides a ligand contact to Mg(2+). A K(+)-binding site is contributed by glutamate 44. Residues glutamate 57 and glutamine 100 each coordinate L-methionine. The segment at 100–110 (QSNDIAQGVDH) is flexible loop. Residues 167 to 169 (DAK), 238 to 239 (RF), aspartate 247, 253 to 254 (RK), alanine 270, and lysine 274 contribute to the ATP site. Aspartate 247 contacts L-methionine. Lysine 278 serves as a coordination point for L-methionine.

The protein belongs to the AdoMet synthase family. Homotetramer; dimer of dimers. Mg(2+) serves as cofactor. It depends on K(+) as a cofactor.

It localises to the cytoplasm. It catalyses the reaction L-methionine + ATP + H2O = S-adenosyl-L-methionine + phosphate + diphosphate. Its pathway is amino-acid biosynthesis; S-adenosyl-L-methionine biosynthesis; S-adenosyl-L-methionine from L-methionine: step 1/1. Its function is as follows. Catalyzes the formation of S-adenosylmethionine (AdoMet) from methionine and ATP. The overall synthetic reaction is composed of two sequential steps, AdoMet formation and the subsequent tripolyphosphate hydrolysis which occurs prior to release of AdoMet from the enzyme. The chain is S-adenosylmethionine synthase from Acidovorax sp. (strain JS42).